Reading from the N-terminus, the 195-residue chain is Glycerol-3-phosphate acyltransferase (195 aa).

6 helical membrane-spanning segments follow: residues 2–22, 54–74, 80–100, 107–127, 132–152, and 155–175; these read IFFS…SSAI, IAIS…WLGY, PIFL…PIFF, GVAT…IVMI, LTVL…FIIP, and AWHF…LVVI.

This sequence belongs to the PlsY family. In terms of assembly, probably interacts with PlsX.

Its subcellular location is the cell inner membrane. It catalyses the reaction an acyl phosphate + sn-glycerol 3-phosphate = a 1-acyl-sn-glycero-3-phosphate + phosphate. The protein operates within lipid metabolism; phospholipid metabolism. Functionally, catalyzes the transfer of an acyl group from acyl-phosphate (acyl-PO(4)) to glycerol-3-phosphate (G3P) to form lysophosphatidic acid (LPA). This enzyme utilizes acyl-phosphate as fatty acyl donor, but not acyl-CoA or acyl-ACP. The sequence is that of Glycerol-3-phosphate acyltransferase from Blochmanniella pennsylvanica (strain BPEN).